Reading from the N-terminus, the 319-residue chain is Ribonucleoside-diphosphate reductase 2 subunit beta (319 aa).

Residues D67, E98, and H101 each coordinate Fe cation. Y105 is an active-site residue. Residues E158, E192, and H195 each contribute to the Fe cation site.

The protein belongs to the ribonucleoside diphosphate reductase small chain family. In terms of assembly, tetramer of two alpha and two beta subunits. Fe cation is required as a cofactor.

The enzyme catalyses a 2'-deoxyribonucleoside 5'-diphosphate + [thioredoxin]-disulfide + H2O = a ribonucleoside 5'-diphosphate + [thioredoxin]-dithiol. Its function is as follows. Provides the precursors necessary for DNA synthesis. Catalyzes the biosynthesis of deoxyribonucleotides from the corresponding ribonucleotides. R2F contains the tyrosyl radical required for catalysis. This is Ribonucleoside-diphosphate reductase 2 subunit beta (nrdF) from Salmonella typhimurium (strain LT2 / SGSC1412 / ATCC 700720).